Here is a 482-residue protein sequence, read N- to C-terminus: Magnesium-dependent glutamate N-prenyltransferase (482 aa).

Residues asparagine 351, threonine 355, glutamate 359, and phenylalanine 366 each coordinate Mg(2+).

The protein belongs to the terpene synthase family. Requires Mg(2+) as cofactor.

It catalyses the reaction (2E)-geranyl diphosphate + L-glutamate = N-geranyl-L-glutamate + diphosphate. The protein operates within secondary metabolite biosynthesis. Its function is as follows. Magnesium-dependent glutamate N-prenyltransferase: part of the gene cluster that mediates the biosynthesis of domoic acid (DA) and derivatives, natural products with neurochemical activity acting as ionotropic glutamate receptor (iGluR) agonists, thus being neurotoxins causing amnesic shellfish poisoning (ASP). Catalyzes the conversion of L-glutamic acid (L-Glu) to N-geranyl-L-glutamic acid (NGG) in the presence of geranyl diphosphate (GPP). Also able to catalyze the formation of farnesyl-L-glutamate from farnesyl diphosphate (FPP). Cannot use dimethylallyl diphosphate (DMAPP) as substrate. This is Magnesium-dependent glutamate N-prenyltransferase from Pseudo-nitzschia multiseries (Marine planktonic diatom).